The chain runs to 844 residues: MFSSESRPTVKLPDKWAKKRCFFQLLSSLSTTLKKLCSSSSHCSGFHLIIRPFQRFFGLEKMYRSTKGASKARRDQINAEIRSLKELLPISDADKARLSYLHIMSLACIYTRKSVFFSQAAAGHGMSGSLLSLPELSDLLHTLPGFLLVLTSEGKLLYLSDNVAEHLGHSMVDLVAQSDSVYDIIDPVDHFIMRGNLVPITTPDTDRLFRCRFSTSKFVRRQGSGNKQAIVRARCLPPPYHASPYWTSNPVWVCFCSPLEASMPQLSTSRNPLPTPPAEQSFLLSCFQSQHSRDMRIHTVQDSVSVYLGYDIETLRSRSWYSLIHPRDLSHASAQHCTLLHNGGERQVEMVVQVEAADHSWIWLYIVLQLETGEYPINSHNYVISESEAWSVRQQLHSEQNQLALLYQESRQSSDPLSSPDQVFTPSSSGLSSQSFDFSFITSGRSSSEELPGTSAPSSMTFDPLEGEEIDPQSHGGGHQMWRSAMTIAPEHLSNINLSTVPQSQVAPPPLPPFKAPPKRQRSEEFICTPPYTPRLSGGSFIFNDETLRPSDHSKSAKMRQSITSATNIGPAQPCRKRLYETLPPTPDSPGSDECILMALPEIRGPLYVDVPHLPFHAPPEGLLTPEASPTKKPCLSFFPREDETERERMEISLLAQYISTLAEGFCHNHPQGASAPPHHANSSLAHIDVLMFEEKAVDDIPLPNLPSPSPVPPSPYSSVPSYSQCRSSPVQEEAAVTLIGVNHLCSVQLTHCNRMTEGGLQDGERPDEDMEMMSSQRSSEAPALTPALPCAQSLLEELVTMEPVFGAAVPMTPADRQQDELYQLPHQGGPQMFYQDGTGDHMF.

The basic motif; degenerate stretch occupies residues 61–74 (KMYRSTKGASKARR). One can recognise a bHLH domain in the interval 61–114 (KMYRSTKGASKARRDQINAEIRSLKELLPISDADKARLSYLHIMSLACIYTRKS). Residues 75–114 (DQINAEIRSLKELLPISDADKARLSYLHIMSLACIYTRKS) form a helix-loop-helix motif region. 2 PAS domains span residues 132–190 (SLPE…PVDH) and 294–343 (DMRI…LHNG). The span at 410 to 422 (SRQSSDPLSSPDQ) shows a compositional bias: polar residues. Disordered regions lie at residues 410–432 (SRQS…SGLS), 444–479 (GRSS…GGGH), 702–725 (PLPN…SYSQ), and 757–784 (TEGG…EAPA). Residues 704–716 (PNLPSPSPVPPSP) are compositionally biased toward pro residues.

In terms of assembly, efficient DNA binding requires dimerization with another bHLH protein.

It is found in the nucleus. Its function is as follows. Transcription factor expressed in neurons of the brain that regulates the excitatory-inhibitory balance within neural circuits and is required for contextual memory in the hippocampus. Plays a key role in the structural and functional plasticity of neurons. Acts as an early-response transcription factor in both excitatory and inhibitory neurons, where it induces distinct but overlapping sets of late-response genes in these two types of neurons, allowing the synapses that form on inhibitory and excitatory neurons to be modified by neuronal activity in a manner specific to their function within a circuit, thereby facilitating appropriate circuit responses to sensory experience. This is Neuronal PAS domain-containing protein 4B (npas4b) from Danio rerio (Zebrafish).